The sequence spans 143 residues: Transcriptional regulator MraZ (143 aa).

2 consecutive SpoVT-AbrB domains span residues 5–47 and 76–119; these read THTP…PRAE and TDEQ…DAQA.

Belongs to the MraZ family. In terms of assembly, forms oligomers.

It localises to the cytoplasm. It is found in the nucleoid. The polypeptide is Transcriptional regulator MraZ (Mycobacterium leprae (strain Br4923)).